A 547-amino-acid chain; its full sequence is Cytochrome P450 monooxygenase oblB (547 aa).

A run of 2 helical transmembrane segments spans residues 42–62 (GAVGAIYAIYISGLVIYRLFL) and 242–262 (FDMFHLGAVSLPLFMGMPWLI). The N-linked (GlcNAc...) asparagine glycan is linked to asparagine 277. The helical transmembrane segment at 345–365 (VLIGSGTMTTAGTMGFLCYYI) threads the bilayer. Heme is bound at residue cysteine 489.

The protein belongs to the cytochrome P450 family. Heme serves as cofactor.

It localises to the membrane. The catalysed reaction is ophiobolin F + 4 reduced [NADPH--hemoprotein reductase] + 4 O2 = ophiobolin C + 4 oxidized [NADPH--hemoprotein reductase] + 6 H2O + 4 H(+). Its pathway is secondary metabolite biosynthesis; terpenoid biosynthesis. Its function is as follows. Cytochrome P450 monooxygenase; part of the gene cluster that mediates the biosynthesis of the sesterterpenes ophiobolins, fungal phytotoxins with potential anti-cancer activities. The first step of the pathway is performed by the sesterterpene synthase oblA that possesses both prenyl transferase and terpene cyclase activity, converting isopentenyl diphosphate and dimethylallyl diphosphate into geranylfarnesyl diphosphate (GFPP) and further converting GFPP into ophiobolin F, respectively. Other sesterterpenoids (C(25) terpenoids) are found as minor products of oblA. The cytochrome P450 monooxygenase oblB then catalyzes a four-step oxidative transformation of ophiobolin F to yield ophiobolin C. The function of the cytochrome P450 monooxygenase oblE has still to be determined. In Emericella variicolor (Aspergillus stellatus), this protein is Cytochrome P450 monooxygenase oblB.